We begin with the raw amino-acid sequence, 121 residues long: Small ribosomal subunit protein bS6 (121 aa).

This sequence belongs to the bacterial ribosomal protein bS6 family.

Binds together with bS18 to 16S ribosomal RNA. The polypeptide is Small ribosomal subunit protein bS6 (rpsF) (Rickettsia prowazekii (strain Madrid E)).